The sequence spans 2298 residues: Protein Ycf2 (2298 aa).

Residue 1652-1659 coordinates ATP; sequence GSIGTGRS.

Belongs to the Ycf2 family.

The protein localises to the plastid. The protein resides in the chloroplast stroma. Probable ATPase of unknown function. Its presence in a non-photosynthetic plant (Epifagus virginiana) and experiments in tobacco indicate that it has an essential function which is probably not related to photosynthesis. In Aethionema cordifolium (Lebanon stonecress), this protein is Protein Ycf2.